Reading from the N-terminus, the 254-residue chain is Very-long-chain (3R)-3-hydroxyacyl-CoA dehydratase 2 (254 aa).

Residue A2 is modified to N-acetylalanine. At 2-41 the chain is on the cytoplasmic side; the sequence is AAVAATAAAKGNGGGGGRAGAGDASGTRKKKGPGPLATAY. Residues 11–33 form a disordered region; sequence KGNGGGGGRAGAGDASGTRKKKG. Gly residues predominate over residues 12 to 21; sequence GNGGGGGRAG. Residues 42-60 traverse the membrane as a helical segment; the sequence is LVIYNVVMTAGWLVIAVGL. Topologically, residues 61-79 are lumenal; the sequence is VRAYLAKGSYHSLYYSIEK. The chain crosses the membrane as a helical span at residues 80-97; that stretch reads PLKFFQTGALLEILHCAI. The Cytoplasmic portion of the chain corresponds to 98-107; sequence GIVPSSVVLT. Residues 108–125 form a helical membrane-spanning segment; that stretch reads SFQVMSRVFLIWAVTHSV. Topologically, residues 126 to 130 are lumenal; sequence KEVQS. Residues 131–146 traverse the membrane as a helical segment; it reads EDSVLLFVIAWTITEI. Topologically, residues 147 to 169 are cytoplasmic; that stretch reads IRYSFYTFSLLNHLPYLIKWARY. Residues 170 to 187 form a helical membrane-spanning segment; that stretch reads TLFIVLYPMGVSGELLTI. Residues Y176 and E183 contribute to the active site. At 188–217 the chain is on the lumenal side; the sequence is YAALPFVRQAGLYSISLPNKYNFSFDYYAF. The segment at 198 to 214 is may be involved in interaction with TECR; the sequence is GLYSISLPNKYNFSFDY. Residue N209 is glycosylated (N-linked (GlcNAc...) asparagine). A helical transmembrane segment spans residues 218 to 235; that stretch reads LILIMISYIPIFPQLYFH. At 236–254 the chain is on the cytoplasmic side; sequence MIHQRRKILSHTEEHKKFE.

This sequence belongs to the very long-chain fatty acids dehydratase HACD family. May interact with enzymes of the ELO family (including ELOVL1); with those enzymes that mediate condensation, the first of the four steps of the reaction cycle responsible for fatty acids elongation, may be part of a larger fatty acids elongase complex. Interacts with BCAP31. Interacts (via the third lumenal loop) with TECR. Highly expressed in testis, spleen, prostate, colon and heart, followed by moderate expression in thymus, ovary, small intestine, peripheral blood leukocytes, liver, skeletal muscle and pancreas. Weakly detected in kidney, placenta, brain and lung.

The protein localises to the endoplasmic reticulum membrane. It catalyses the reaction a very-long-chain (3R)-3-hydroxyacyl-CoA = a very-long-chain (2E)-enoyl-CoA + H2O. The catalysed reaction is (3R)-hydroxyhexadecanoyl-CoA = (2E)-hexadecenoyl-CoA + H2O. The enzyme catalyses (3R)-hydroxyoctadecanoyl-CoA = (2E)-octadecenoyl-CoA + H2O. It carries out the reaction (3R)-hydroxyeicosanoyl-CoA = (2E)-eicosenoyl-CoA + H2O. It catalyses the reaction (3R)-hydroxydocosanoyl-CoA = (2E)-docosenoyl-CoA + H2O. The catalysed reaction is (3R)-hydroxytetracosanoyl-CoA = (2E)-tetracosenoyl-CoA + H2O. The enzyme catalyses (3R)-hydroxyhexacosanoyl-CoA = (2E)-hexacosenoyl-CoA + H2O. The protein operates within lipid metabolism; fatty acid biosynthesis. Its function is as follows. Catalyzes the third of the very long-chain fatty acids (VLCFA) elongation four-step cycle (condensation, reduction, dehydration, and reduction). This endoplasmic reticulum-elongation process is characterized by the addition of two carbons to the lipid chain through each cycle. This enzyme catalyzes the dehydration of the 3-hydroxyacyl-CoA intermediate into trans-2,3-enoyl-CoA, within each cycle of elongation. Therefore, it participates in the production of various VLCFAs involved in multiple biological processes as precursors of membrane lipids and lipid mediators. The protein is Very-long-chain (3R)-3-hydroxyacyl-CoA dehydratase 2 of Homo sapiens (Human).